A 401-amino-acid chain; its full sequence is Histone acetyltransferase type B subunit 2 (401 aa).

WD repeat units lie at residues 116 to 147, 158 to 189, 206 to 237, 249 to 280, and 293 to 324; these read EHEEEITRARYMPQDPNIVATINGQGTVFLYS, FHKDNGYALSFSTLVKGRLLSGSDDHTVALWE, LHSDIINDNKWHNFNKDLFGTVSEDSLLKIND, KCPQPFNTLAFSHHSSNLLAAAGMDSYVYLYD, and GHEDAVNNLEFSTHVDGVVVSSGSDNRLMMWD. The interval 335 to 339 is interaction with the histone H4 N-terminus; that stretch reads DDAED. One copy of the WD 6 repeat lies at 350–381; sequence GHRSSVNDFDLNPQIPWLVASAEEENILQVWK.

The protein belongs to the WD repeat RBAP46/RBAP48/MSI1 family. In terms of assembly, component of the HAT-B complex composed of at least HAT1 and HAT2. In the cytoplasm, this complex binds to the histone H4 tail. In the nucleus, the HAT-B complex has an additional component, the histone H3/H4 chaperone HIF1.

Its subcellular location is the cytoplasm. The protein localises to the nucleus. Its function is as follows. Regulatory subunit of the histone acetylase B (HAT-B) complex. The complex acetylates 'Lys-12' of histone H4 which is required for telomeric silencing. HAT2 is required for high affinity binding of the acetyltransferase to histone H4, for the nuclear location of HAT1 and for the HAT1-HIF1 interaction. Alone, it is unable to bind to H4, requiring HAT1 for high affinity interaction with the histone tail. HAT2 also has a HAT1 independent function in life-span regulation. In Saccharomyces cerevisiae (strain ATCC 204508 / S288c) (Baker's yeast), this protein is Histone acetyltransferase type B subunit 2 (HAT2).